The chain runs to 277 residues: Small ribosomal subunit protein mS23 (277 aa).

Disordered regions lie at residues 48 to 85 and 232 to 277; these read APSH…KKPS and LAAF…GPPI. Over residues 244–269 the composition is skewed to acidic residues; that stretch reads ESGESEDEIPLIEEEDAIGASEESET.

It belongs to the mitochondrion-specific ribosomal protein mS23 family. Component of the mitochondrial small ribosomal subunit.

Its subcellular location is the mitochondrion. In Ajellomyces capsulatus (strain NAm1 / WU24) (Darling's disease fungus), this protein is Small ribosomal subunit protein mS23 (RSM25).